The chain runs to 309 residues: Ribonuclease Z (309 aa).

Zn(2+) is bound by residues His-63, His-65, Asp-67, His-68, His-145, Asp-216, and His-274. Asp-67 acts as the Proton acceptor in catalysis.

The protein belongs to the RNase Z family. Homodimer. It depends on Zn(2+) as a cofactor.

It catalyses the reaction Endonucleolytic cleavage of RNA, removing extra 3' nucleotides from tRNA precursor, generating 3' termini of tRNAs. A 3'-hydroxy group is left at the tRNA terminus and a 5'-phosphoryl group is left at the trailer molecule.. Zinc phosphodiesterase, which displays some tRNA 3'-processing endonuclease activity. Probably involved in tRNA maturation, by removing a 3'-trailer from precursor tRNA. The polypeptide is Ribonuclease Z (Streptococcus equi subsp. zooepidemicus (strain H70)).